The following is an 800-amino-acid chain: Phenylalanine--tRNA ligase beta subunit (800 aa).

Positions 39-154 constitute a tRNA-binding domain; that stretch reads TKDIKNLVVG…ESQVPGTDAL (116 aa). The 76-residue stretch at 408–483 folds into the B5 domain; that stretch reads AFITPIDITA…RIYGYDDIPS (76 aa). Mg(2+) is bound by residues Asp461, Asp467, Glu470, and Glu471. An FDX-ACB domain is found at 708-800; sequence PRFPGMSRDI…ALIEQGAVIR (93 aa).

The protein belongs to the phenylalanyl-tRNA synthetase beta subunit family. Type 1 subfamily. Tetramer of two alpha and two beta subunits. Mg(2+) serves as cofactor.

The protein resides in the cytoplasm. It carries out the reaction tRNA(Phe) + L-phenylalanine + ATP = L-phenylalanyl-tRNA(Phe) + AMP + diphosphate + H(+). This is Phenylalanine--tRNA ligase beta subunit from Staphylococcus aureus (strain MSSA476).